The primary structure comprises 134 residues: Cytochrome b5 (134 aa).

The region spanning 5 to 81 (KKVLGFEEVS…MEKYYIGEID (77 aa)) is the Cytochrome b5 heme-binding domain. Heme is bound by residues histidine 40 and histidine 64. A helical transmembrane segment spans residues 107 to 127 (FMIKILQFLVPILILGLALVV).

This sequence belongs to the cytochrome b5 family.

The protein localises to the endoplasmic reticulum membrane. Its subcellular location is the microsome membrane. Functionally, membrane bound hemoprotein which function as an electron carrier for several membrane bound oxygenases. The chain is Cytochrome b5 (CYB5) from Brassica oleracea var. botrytis (Cauliflower).